A 277-amino-acid chain; its full sequence is Caspase-6 (277 aa).

A propeptide spanning residues 1–5 (MTETD) is cleaved from the precursor. The tri-arginine exosite stretch occupies residues 25 to 27 (KRR). At Ser62 the chain carries Phosphoserine. The active site involves His104. Residues 108–125 (NHIYAYDAKIEIQTLTGL) form a 130's region region. Residue Cys146 is part of the active site. The propeptide occupies 163–176 (HQTDKLDDNVTQVD). Ser240 carries the phosphoserine modification. S-palmitoyl cysteine attachment occurs at residues Cys247 and Cys260.

This sequence belongs to the peptidase C14A family. As to quaternary structure, heterotetramer that consists of two anti-parallel arranged heterodimers, each one formed by a 18 kDa (p18) and a 11 kDa (p11) subunits. Interacts with BIRC6/bruce. Interacts with RIPK3. Heterotetramer that consists of two anti-parallel arranged heterodimers, each one formed by a 18 kDa (Caspase-6 subunit p18) and a 11 kDa (Caspase-6 subunit p11) subunit. In terms of processing, phosphorylated by NUAK1; phosphorylation inhibits self-activation. Phosphorylation at Ser-240 by AMP-activated protein kinase (PRKAA1 or PRKAA2) inhibits autocleavage, preventing caspase activation, thereby preventing hepatocyte apoptosis. Post-translationally, palmitoylation by ZDHHC17 blocks dimerization and subsequent activation, leading to inhibit the cysteine protease activity. Can be cleaved and activated by different caspases, depending on the context. Cleaved and activated by caspase-8 (CASP8) and subsequently by caspase-3 (CASP3). Can also undergo autoactivation by mediating autocleavage at Asp-162 and Asp-176, while it is not able to cleave its N-terminal disordered prodomain. Cleaved and activated by CASP1, possibly in the context of inflammation.

The protein resides in the cytoplasm. The protein localises to the nucleus. The enzyme catalyses Strict requirement for Asp at position P1 and has a preferred cleavage sequence of Val-Glu-His-Asp-|-.. Its activity is regulated as follows. During activation, the N-terminal disordered prodomain is removed by cleavage. Concomitantly, double cleavage gives rise to a large 18-kDa and a small 11-kDa subunit. The two large and two small subunits then assemble to form the active CASP6 complex. Can be cleaved and activated by different caspases, depending on the context. Cleaved and activated by caspase-8 (CASP8) and subsequently by caspase-3 (CASP3). Can also undergo autoactivation by mediating autocleavage at Asp-162 and Asp-176, while it is not able to cleave its N-terminal disordered prodomain. Intramolecular cleavage at Asp-176 is a prerequisite for CASP6 self-activation. Cleaved and activated by CASP1 in neurons, possibly in the context of inflammation. Phosphorylation at Ser-240 inhibits autocleavage, preventing caspase activation. In terms of biological role, cysteine protease that plays essential roles in programmed cell death, axonal degeneration, development and innate immunity. Acts as a non-canonical executioner caspase during apoptosis: localizes in the nucleus and cleaves the nuclear structural protein NUMA1 and lamin A/LMNA thereby inducing nuclear shrinkage and fragmentation. Lamin-A/LMNA cleavage is required for chromatin condensation and nuclear disassembly during apoptotic execution. Acts as a regulator of liver damage by promoting hepatocyte apoptosis: in absence of phosphorylation by AMP-activated protein kinase (AMPK), catalyzes cleavage of BID, leading to cytochrome c release, thereby participating in nonalcoholic steatohepatitis. Cleaves PARK7/DJ-1 in cells undergoing apoptosis. Involved in intrinsic apoptosis by mediating cleavage of RIPK1. Furthermore, cleaves many transcription factors such as NF-kappa-B and cAMP response element-binding protein/CREBBP. Cleaves phospholipid scramblase proteins XKR4 and XKR9. In addition to apoptosis, involved in different forms of programmed cell death. Plays an essential role in defense against viruses by acting as a central mediator of the ZBP1-mediated pyroptosis, apoptosis, and necroptosis (PANoptosis), independently of its cysteine protease activity. PANoptosis is a unique inflammatory programmed cell death, which provides a molecular scaffold that allows the interactions and activation of machinery required for inflammasome/pyroptosis, apoptosis and necroptosis. Mechanistically, interacts with RIPK3 and enhances the interaction between RIPK3 and ZBP1, leading to ZBP1-mediated inflammasome activation and cell death. Plays an essential role in axon degeneration during axon pruning which is the remodeling of axons during neurogenesis but not apoptosis. Regulates B-cell programs both during early development and after antigen stimulation. This chain is Caspase-6, found in Rattus norvegicus (Rat).